The following is a 179-amino-acid chain: ATP synthase subunit delta 1 (179 aa).

Belongs to the ATPase delta chain family. As to quaternary structure, F-type ATPases have 2 components, F(1) - the catalytic core - and F(0) - the membrane proton channel. F(1) has five subunits: alpha(3), beta(3), gamma(1), delta(1), epsilon(1). F(0) has three main subunits: a(1), b(2) and c(10-14). The alpha and beta chains form an alternating ring which encloses part of the gamma chain. F(1) is attached to F(0) by a central stalk formed by the gamma and epsilon chains, while a peripheral stalk is formed by the delta and b chains.

It is found in the cell inner membrane. Its function is as follows. F(1)F(0) ATP synthase produces ATP from ADP in the presence of a proton or sodium gradient. F-type ATPases consist of two structural domains, F(1) containing the extramembraneous catalytic core and F(0) containing the membrane proton channel, linked together by a central stalk and a peripheral stalk. During catalysis, ATP synthesis in the catalytic domain of F(1) is coupled via a rotary mechanism of the central stalk subunits to proton translocation. This protein is part of the stalk that links CF(0) to CF(1). It either transmits conformational changes from CF(0) to CF(1) or is implicated in proton conduction. The protein is ATP synthase subunit delta 1 of Syntrophotalea carbinolica (strain DSM 2380 / NBRC 103641 / GraBd1) (Pelobacter carbinolicus).